The following is a 459-amino-acid chain: Elongation factor 1-alpha (459 aa).

Glycine 2 is subject to N,N,N-trimethylglycine. Lysine 3 is subject to N6,N6-dimethyllysine; alternate. Lysine 3 carries the N6-methyllysine; alternate modification. Positions 5–239 (KSHINVVVIG…DAIDPPSRPT (235 aa)) constitute a tr-type G domain. The segment at 14–21 (GHVDSGKS) is G1. GTP is bound at residue 14 to 21 (GHVDSGKS). Position 30 is an N6-methyllysine (lysine 30). The interval 70-74 (GITID) is G2. The residue at position 79 (lysine 79) is an N6,N6,N6-trimethyllysine. Residues 91 to 94 (DAPG) are G3. GTP is bound by residues 91-95 (DAPGH) and 153-156 (NKMD). The G4 stretch occupies residues 153–156 (NKMD). Residues 192 to 194 (SGF) form a G5 region. Position 315 is an N6,N6-dimethyllysine; alternate (lysine 315). N6-methyllysine; alternate is present on lysine 315. Lysine 389 is subject to N6-methyllysine.

It belongs to the TRAFAC class translation factor GTPase superfamily. Classic translation factor GTPase family. EF-Tu/EF-1A subfamily.

The protein resides in the cytoplasm. Functionally, this protein promotes the GTP-dependent binding of aminoacyl-tRNA to the A-site of ribosomes during protein biosynthesis. In Aureobasidium pullulans (Black yeast), this protein is Elongation factor 1-alpha (TEF1).